Consider the following 92-residue polypeptide: Movement protein (92 aa).

The chain crosses the membrane as a helical span at residues 38–58 (VIALVVILVSVGVFYLAYTLF).

The protein belongs to the mastrevirus movement protein family. Interacts with the capsid protein (CP). Part of a MP-CP-viral DNA complex.

Its subcellular location is the host membrane. In terms of biological role, involved in the viral transport within, and between cells. The polypeptide is Movement protein (Phaseolus vulgaris (Kidney bean)).